A 60-amino-acid chain; its full sequence is Large ribosomal subunit protein bL32 (60 aa).

Residues 1–60 are disordered; it reads MAVQQNKKSPSKRGMHRSHNALTVPGIAVEPTTGETHMRHHISPNGFYRGRQVLKNKSEA. Positions 9–19 are enriched in basic residues; sequence SPSKRGMHRSH.

Belongs to the bacterial ribosomal protein bL32 family.

This is Large ribosomal subunit protein bL32 from Acidovorax ebreus (strain TPSY) (Diaphorobacter sp. (strain TPSY)).